Here is a 164-residue protein sequence, read N- to C-terminus: Peptide deformylase (164 aa).

Residues Cys-87 and His-129 each contribute to the Fe cation site. Glu-130 is a catalytic residue. His-133 serves as a coordination point for Fe cation.

It belongs to the polypeptide deformylase family. Requires Fe(2+) as cofactor.

The enzyme catalyses N-terminal N-formyl-L-methionyl-[peptide] + H2O = N-terminal L-methionyl-[peptide] + formate. Its function is as follows. Removes the formyl group from the N-terminal Met of newly synthesized proteins. Requires at least a dipeptide for an efficient rate of reaction. N-terminal L-methionine is a prerequisite for activity but the enzyme has broad specificity at other positions. The polypeptide is Peptide deformylase (Thermotoga neapolitana (strain ATCC 49049 / DSM 4359 / NBRC 107923 / NS-E)).